The following is a 537-amino-acid chain: Caspase recruitment domain-containing protein 8 (537 aa).

The span at 1 to 23 shows a compositional bias: basic and acidic residues; that stretch reads MEKKECPEKSSSSEEELPRRDSG. 2 disordered regions span residues 1–28 and 113–133; these read MEKKECPEKSSSSEEELPRRDSGSSRNI and GDIPSVSEEQESSEGQDSGDI. The interval 161–296 is ZU5; sequence FLGPEGNVDV…FYAVLESPSF (136 aa). In terms of domain architecture, FIIND spans 161 to 446; sequence FLGPEGNVDV…LQLVAASAPP (286 aa). The UPA stretch occupies residues 297-446; that stretch reads SLMGILLRIA…LQLVAASAPP (150 aa). The region spanning 446–536 is the CARD domain; sequence PPFSGAAFVK…YLVSYLRQQN (91 aa).

As to quaternary structure, interacts with DPP9; leading to inhibit activation of the inflammasome. DPP9 acts via formation of a ternary complex, composed of a DPP9 homodimer, one full-length CARD8 protein, and one cleaved C-terminus of CARD8 (Caspase recruitment domain-containing protein 8, C-terminus). Interacts with DPP8; leading to inhibit activation of the inflammasome, probably via formation of a ternary complex with DPP8. Interacts with NLRP3. Interacts with IKBKG/NEMO. Interacts with DRAL. Binds to caspase-1 (CASP1), CARD16/pseudo-ICE and CARD18/ICEBERG. Interacts with NLRP2 (via NACHT domain). In terms of assembly, interacts with the C-terminal part of CARD8 (Caspase recruitment domain-containing protein 8, C-terminus) in absence of pathogens and other damage-associated signals. Interacts with the N-terminal part of CARD8 (Caspase recruitment domain-containing protein 8, N-terminus) in absence of pathogens and other damage-associated signals. Homomultimer; forms the CARD8 inflammasome polymeric complex, a filament composed of homopolymers of this form in response to pathogens and other damage-associated signals. The CARD8 inflammasome polymeric complex directly recruits pro-caspase-1 (proCASP1) independently of PYCARD/ASC. Interacts (via CARD domain) with CASP1 (via CARD domain); leading to CASP1 activation. Post-translationally, undergoes autocatalytic processing within the FIIND domain to generate the N-terminal and C-terminal parts, which are associated non-covalently in absence of pathogens and other damage-associated signals. Ubiquitinated by the N-end rule pathway in response to pathogens and other damage-associated signals, leading to its degradation by the proteasome and subsequent release of the cleaved C-terminal part of the protein (Caspase recruitment domain-containing protein 8, C-terminus), which polymerizes and forms the CARD8 inflammasome. In terms of processing, (Microbial infection) Proteolytic cleavage by HIV-1 protease in the disordered region and within the ZU5 region of the FIIND domain promotes ubiquitination of the N-terminal part by the N-end rule pathway and degradation by the proteasome, releasing the cleaved C-terminal part of the protein (Caspase recruitment domain-containing protein 8, C-terminus), which polymerizes and forms the CARD8 inflammasome. Post-translationally, undergoes less autocatalytic processing within the FIIND domain compared to isoform 5. In terms of tissue distribution, high expression in lung, ovary, testis and placenta. Lower expression in heart, kidney and liver. Also expressed in spleen, lymph node and bone marrow.

The protein resides in the cytoplasm. It is found in the nucleus. Its subcellular location is the inflammasome. CARD8 inflammasome is activated by HIV-1 protease activity: HIV-1 protease cleaves CARD8, promoting ubiquitination and degradation of the N-terminal part, releasing the cleaved C-terminal part of the protein (Caspase recruitment domain-containing protein 8, C-terminus), which polymerizes and forms the CARD8 inflammasome. CARD8 inflammasome is inhibited by DPP8 and DPP9, which sequester the C-terminal fragment of CARD8 (Caspase recruitment domain-containing protein 8, C-terminus) in a ternary complex, thereby preventing CARD8 oligomerization and activation. CARD8 inflammasome is activated by Val-boroPro (Talabostat, PT-100), an inhibitor of dipeptidyl peptidases DPP8 and DPP9. Val-boroPro relieves inhibition of DPP8 and/or DPP9 by inducing the proteasome-mediated destruction of the N-terminal part of CARD8, releasing its C-terminal part from autoinhibition. Indirectly activated by the pseudodipeptide CQ31. CQ31 directly inactivates the peptidases PEPD and XPNPEP1, leading to an accumulation of dipeptides that weaky inhibit DDP8 and DPP9, relieving DPP8- and/or DPP9-mediated inhibition of CARD8. Functionally, inflammasome sensor, which mediates inflammasome activation in response to various pathogen-associated signals, leading to subsequent pyroptosis of CD4(+) T-cells and macrophages. Inflammasomes are supramolecular complexes that assemble in the cytosol in response to pathogens and other damage-associated signals and play critical roles in innate immunity and inflammation. Acts as a recognition receptor (PRR): recognizes specific pathogens and other damage-associated signals, such as HIV-1 protease activity or Val-boroPro inhibitor, and mediates CARD8 inflammasome activation. In response to pathogen-associated signals, the N-terminal part of CARD8 is degraded by the proteasome, releasing the cleaved C-terminal part of the protein (Caspase recruitment domain-containing protein 8, C-terminus), which polymerizes to initiate the formation of the inflammasome complex: the CARD8 inflammasome directly recruits pro-caspase-1 (proCASP1) independently of PYCARD/ASC and promotes caspase-1 (CASP1) activation, which subsequently cleaves and activates inflammatory cytokines IL1B and IL18 and gasdermin-D (GSDMD), leading to pyroptosis. Ability to sense HIV-1 protease activity leads to the clearance of latent HIV-1 in patient CD4(+) T-cells after viral reactivation; in contrast, HIV-1 can evade CARD8-sensing when its protease remains inactive in infected cells prior to viral budding. Also acts as a negative regulator of the NLRP3 inflammasome. May also act as an inhibitor of NF-kappa-B activation. In terms of biological role, constitutes the precursor of the CARD8 inflammasome, which mediates autoproteolytic processing within the FIIND domain to generate the N-terminal and C-terminal parts, which are associated non-covalently in absence of pathogens and other damage-associated signals. Its function is as follows. Regulatory part that prevents formation of the CARD8 inflammasome: in absence of pathogens and other damage-associated signals, interacts with the C-terminal part of CARD8 (Caspase recruitment domain-containing protein 8, C-terminus), preventing activation of the CARD8 inflammasome. In response to pathogen-associated signals, this part is ubiquitinated by the N-end rule pathway and degraded by the proteasome, releasing the cleaved C-terminal part of the protein, which polymerizes and forms the CARD8 inflammasome. Constitutes the active part of the CARD8 inflammasome. In absence of pathogens and other damage-associated signals, interacts with the N-terminal part of CARD8 (Caspase recruitment domain-containing protein 8, N-terminus), preventing activation of the CARD8 inflammasome. In response to pathogen-associated signals, the N-terminal part of CARD8 is degraded by the proteasome, releasing this form, which polymerizes to form the CARD8 inflammasome complex: the CARD8 inflammasome complex then directly recruits pro-caspase-1 (proCASP1) and promotes caspase-1 (CASP1) activation, leading to gasdermin-D (GSDMD) cleavage and subsequent pyroptosis. This Homo sapiens (Human) protein is Caspase recruitment domain-containing protein 8.